The following is a 351-amino-acid chain: LIM/homeobox protein ceh-14 (351 aa).

LIM zinc-binding domains lie at 46-105 and 105-169; these read AICS…KFGT and TKCS…ARDK. The homeobox DNA-binding region spans 180–239; it reads NKRPRTTISAKSLETLKQAYQTSSKPARHVREQLASETGLDMRVVQVWFQNRRAKEKRLK. Residues 238–254 show a composition bias toward basic and acidic residues; it reads LKKDAGRRWKSSNRAES. A disordered region spans residues 238 to 268; it reads LKKDAGRRWKSSNRAESDSNSPIESINGQSP. Residues 255-268 are compositionally biased toward polar residues; sequence DSNSPIESINGQSP.

Interacts (via LIM zinc-binding domains 1 and 2) with lim-7 (via LID domain). May interact with itself. May interact with homeobox protein ceh-63. As to expression, expressed in the anterior AFDL/R sensory neurons and BDUL/R and ALA interneurons, and in PVT, PVQL/R, DVC, PVNL/R, PVWL/R, PVR, PHCL/R, PHAL/R and PHBL/R cells in the tail region.

Its subcellular location is the nucleus. Probable transcription factor, modulating expression of helix-loop-helix protein mbr-1 and homeobox protein ceh-63, perhaps acting in concert with ceh-63. Binds to a motif including the sequence 5'-CTAAT-3' in regulatory promoter elements. Confers thermosensory function to neurons. Required for correct AFD-mediated thermotaxis. In concert with homeobox protein ttx-1, perhaps as components in a complex, specifies identity of AFD neurons, acting by synergistically regulating receptor-type guanylyl cyclase gcy-8, gcy-18 and other genes. Involved in postembryonic differentiation of the ALA neuron, and regulation of genes that contribute to behavioral quiescence, a sleep-like behavior mediated by ALA. Regulates its own expression and also that of homeodomain ceh-17, together forming an autoregulatory loop in the ALA neuron. Required for initial pathfinding of the ALA axons, but largely dispensable for axon migration. Involved in regulating postembryonic axon maintenance in the ventral nerve cord, acting in concert with LIM homeobox protein lim-6, via modulation of expression of immunoglobulin domain zig genes in the interneuron PVT. Plays a role in controlling the peptidergic identity of the BDU neurons, regulating expression of flp-10, nlp-1, and nlp-15, thereby modulating the harsh touch response. In Caenorhabditis elegans, this protein is LIM/homeobox protein ceh-14 (ceh-14).